Reading from the N-terminus, the 456-residue chain is Phospholipase A1 member A (456 aa).

An N-terminal signal peptide occupies residues 1-25; that stretch reads MRPGLWETCFWLWGPLLWLSIGSSG. The Nucleophile role is filled by Ser-166. The active-site Charge relay system is Asp-190. A disulfide bridge connects residues Cys-245 and Cys-258. The Charge relay system role is filled by His-260. 2 cysteine pairs are disulfide-bonded: Cys-282/Cys-293 and Cys-296/Cys-304. Asn-365 carries an N-linked (GlcNAc...) asparagine glycan.

The protein belongs to the AB hydrolase superfamily. Lipase family.

The protein localises to the secreted. The catalysed reaction is a 1,2-diacyl-sn-glycero-3-phospho-L-serine + H2O = a 2-acyl-sn-glycero-3-phospho-L-serine + a fatty acid + H(+). It catalyses the reaction 1,2-di-(9Z)-octadecenoyl-sn-glycero-3-phospho-L-serine + H2O = 2-(9Z-octadecenoyl)-sn-glycero-3-phospho-L-serine + (9Z)-octadecenoate + H(+). It carries out the reaction 1-hexadecanoyl-2-(5Z,8Z,11Z,14Z-eicosatetraenoyl)-sn-glycero-3-phospho-L-serine + H2O = 2-(5Z,8Z,11Z,14Z)-eicosatetraenoyl-sn-glycero-3-phospho-L-serine + hexadecanoate + H(+). The enzyme catalyses a 1-acyl-sn-glycero-3-phospho-L-serine + H2O = sn-glycero-3-phospho-L-serine + a fatty acid + H(+). The catalysed reaction is 1-(9Z-octadecenoyl)-sn-glycero-3-phospho-L-serine + H2O = sn-glycero-3-phospho-L-serine + (9Z)-octadecenoate + H(+). Functionally, hydrolyzes the ester bond of the acyl group attached at the sn-1 position of phosphatidylserines (phospholipase A1 activity) and 1-acyl-2-lysophosphatidylserines (lysophospholipase activity) in the pathway of phosphatidylserines acyl chain remodeling. Cleaves phosphatidylserines exposed on the outer leaflet of the plasma membrane of apoptotic cells producing 2-acyl-1-lysophosphatidylserines, which in turn enhance mast cell activation and histamine production. Has no activity toward other glycerophospholipids including phosphatidylcholines, phosphatidylethanolamines, phosphatidic acids or phosphatidylinositols, or glycerolipids such as triolein. The sequence is that of Phospholipase A1 member A from Mus musculus (Mouse).